The primary structure comprises 141 residues: Large ribosomal subunit protein uL11 (141 aa).

This sequence belongs to the universal ribosomal protein uL11 family. Part of the ribosomal stalk of the 50S ribosomal subunit. Interacts with L10 and the large rRNA to form the base of the stalk. L10 forms an elongated spine to which L12 dimers bind in a sequential fashion forming a multimeric L10(L12)X complex. One or more lysine residues are methylated.

In terms of biological role, forms part of the ribosomal stalk which helps the ribosome interact with GTP-bound translation factors. The sequence is that of Large ribosomal subunit protein uL11 from Helicobacter hepaticus (strain ATCC 51449 / 3B1).